Here is a 243-residue protein sequence, read N- to C-terminus: Ribonuclease 3 (243 aa).

In terms of domain architecture, RNase III spans valine 10–glycine 146. A Mg(2+)-binding site is contributed by glutamate 59. Aspartate 63 is a catalytic residue. Mg(2+)-binding residues include aspartate 132 and glutamate 135. Glutamate 135 is an active-site residue. The region spanning aspartate 172–glutamine 241 is the DRBM domain. The span at glycine 219 to alanine 231 shows a compositional bias: basic and acidic residues. Residues glycine 219–lysine 243 are disordered.

Belongs to the ribonuclease III family. In terms of assembly, homodimer. Mg(2+) is required as a cofactor.

The protein localises to the cytoplasm. It carries out the reaction Endonucleolytic cleavage to 5'-phosphomonoester.. In terms of biological role, digests double-stranded RNA. Involved in the processing of primary rRNA transcript to yield the immediate precursors to the large and small rRNAs (23S and 16S). Processes some mRNAs, and tRNAs when they are encoded in the rRNA operon. Processes pre-crRNA and tracrRNA of type II CRISPR loci if present in the organism. This is Ribonuclease 3 from Staphylococcus aureus (strain Mu3 / ATCC 700698).